The sequence spans 378 residues: Flap endonuclease 1 (378 aa).

The tract at residues 1-105 is N-domain; that stretch reads MGIKGLNSII…HELDKRTERR (105 aa). D34 provides a ligand contact to Mg(2+). 2 residues coordinate DNA: R47 and R71. The Mg(2+) site is built by D87, E156, E158, D177, and D179. The segment at 120–251 is I-domain; the sequence is EIMKHERRLV…VTALKLIKEH (132 aa). E156 contacts DNA. Residues G229 and D231 each coordinate DNA. D231 serves as a coordination point for Mg(2+). The segment at 337–345 is interaction with PCNA; that stretch reads VQGRLDSFF. The segment covering 356–367 has biased composition (low complexity); sequence AASARKAQAAKK. The disordered stretch occupies residues 356 to 378; it reads AASARKAQAAKKTNQKGKVLKRR. A compositionally biased stretch (basic residues) spans 368-378; the sequence is TNQKGKVLKRR.

The protein belongs to the XPG/RAD2 endonuclease family. FEN1 subfamily. In terms of assembly, interacts with PCNA. Three molecules of FEN1 bind to one PCNA trimer with each molecule binding to one PCNA monomer. PCNA stimulates the nuclease activity without altering cleavage specificity. Mg(2+) is required as a cofactor. Post-translationally, phosphorylated. Phosphorylation upon DNA damage induces relocalization to the nuclear plasma.

It localises to the nucleus. The protein localises to the nucleolus. The protein resides in the nucleoplasm. It is found in the mitochondrion. Its function is as follows. Structure-specific nuclease with 5'-flap endonuclease and 5'-3' exonuclease activities involved in DNA replication and repair. During DNA replication, cleaves the 5'-overhanging flap structure that is generated by displacement synthesis when DNA polymerase encounters the 5'-end of a downstream Okazaki fragment. It enters the flap from the 5'-end and then tracks to cleave the flap base, leaving a nick for ligation. Also involved in the long patch base excision repair (LP-BER) pathway, by cleaving within the apurinic/apyrimidinic (AP) site-terminated flap. Acts as a genome stabilization factor that prevents flaps from equilibrating into structures that lead to duplications and deletions. Also possesses 5'-3' exonuclease activity on nicked or gapped double-stranded DNA, and exhibits RNase H activity. Also involved in replication and repair of rDNA and in repairing mitochondrial DNA. The polypeptide is Flap endonuclease 1 (Eremothecium gossypii (strain ATCC 10895 / CBS 109.51 / FGSC 9923 / NRRL Y-1056) (Yeast)).